A 399-amino-acid chain; its full sequence is Carbamoyl phosphate synthase small chain (399 aa).

The tract at residues 1-206 is CPSase; it reads MTQTIPSPKP…NKGYKTNNDA (206 aa). L-glutamine is bound by residues S60, G258, and G260. In terms of domain architecture, Glutamine amidotransferase type-1 spans 210–398; the sequence is HIVAIDYGIK…FNLIMDYKKT (189 aa). C287 functions as the Nucleophile in the catalytic mechanism. L-glutamine contacts are provided by L288, Q291, N329, G331, and F332. Catalysis depends on residues H371 and E373.

The protein belongs to the CarA family. In terms of assembly, composed of two chains; the small (or glutamine) chain promotes the hydrolysis of glutamine to ammonia, which is used by the large (or ammonia) chain to synthesize carbamoyl phosphate. Tetramer of heterodimers (alpha,beta)4.

It carries out the reaction hydrogencarbonate + L-glutamine + 2 ATP + H2O = carbamoyl phosphate + L-glutamate + 2 ADP + phosphate + 2 H(+). The enzyme catalyses L-glutamine + H2O = L-glutamate + NH4(+). Its pathway is amino-acid biosynthesis; L-arginine biosynthesis; carbamoyl phosphate from bicarbonate: step 1/1. It functions in the pathway pyrimidine metabolism; UMP biosynthesis via de novo pathway; (S)-dihydroorotate from bicarbonate: step 1/3. Its function is as follows. Small subunit of the glutamine-dependent carbamoyl phosphate synthetase (CPSase). CPSase catalyzes the formation of carbamoyl phosphate from the ammonia moiety of glutamine, carbonate, and phosphate donated by ATP, constituting the first step of 2 biosynthetic pathways, one leading to arginine and/or urea and the other to pyrimidine nucleotides. The small subunit (glutamine amidotransferase) binds and cleaves glutamine to supply the large subunit with the substrate ammonia. This Bartonella henselae (strain ATCC 49882 / DSM 28221 / CCUG 30454 / Houston 1) (Rochalimaea henselae) protein is Carbamoyl phosphate synthase small chain.